The following is a 389-amino-acid chain: Metal tolerance protein 2 (389 aa).

Residues 1 to 81 are Cytoplasmic-facing; the sequence is MGFRLAHLAA…GGEASERIFR (81 aa). Residues 82–102 traverse the membrane as a helical segment; sequence LGLAADVVLTVGKAVTGYLSG. At 103–104 the chain is on the vacuolar side; it reads ST. The chain crosses the membrane as a helical span at residues 105-125; the sequence is AIAADAAHSLSDIVLSGVALL. Residues 126–148 are Cytoplasmic-facing; that stretch reads SYKAAKAPRDKEHPYGHGKFESL. Residues 149 to 169 form a helical membrane-spanning segment; that stretch reads GALGISSMLLVTAGGIAWHAF. Residues 170–206 lie on the Vacuolar side of the membrane; the sequence is DVLQGVMSSAPDIIGNVSHAHHSHGSSGHHHGIDLEH. A helical transmembrane segment spans residues 207 to 227; that stretch reads PILALSVTAFAISVKEGLYWI. The Cytoplasmic portion of the chain corresponds to 228–250; sequence TKRAGEKEGSGLMKANAWHHRSD. The helical transmembrane segment at 251-271 threads the bilayer; sequence AISSVVALLGVGGSILGVPYL. Topologically, residues 272–275 are vacuolar; it reads DPLA. The chain crosses the membrane as a helical span at residues 276-296; the sequence is GLVVSGMILKAGVHTGYESVL. At 297–389 the chain is on the cytoplasmic side; that stretch reads ELVDAAVDPS…SLQPLNQNAL (93 aa).

Belongs to the cation diffusion facilitator (CDF) transporter (TC 2.A.4) family. SLC30A subfamily.

Its subcellular location is the vacuole membrane. In terms of biological role, involved in sequestration of excess metal in the cytoplasm into vacuoles to maintain metal homeostasis. The sequence is that of Metal tolerance protein 2 (MTP2) from Oryza sativa subsp. japonica (Rice).